The chain runs to 594 residues: Type I restriction enzyme EcoEI specificity subunit (594 aa).

Belongs to the type-I restriction system S methylase family. As to quaternary structure, the type I restriction/modification system is composed of three polypeptides R, M and S; the restriction enzyme has stoichiometry R(2)M(2)S(1) while the methyltransferase is M(2)S(1).

Functionally, the specificity (S) subunit of a type I restriction enzyme; this subunit dictates DNA sequence specificity. The M and S subunits together form a methyltransferase (MTase) that methylates two adenine residues of the sequence 5'-GAGN(7)ATGC-3'. In the presence of the R subunit the complex can also act as an endonuclease, binding to the same target sequence but cutting the DNA some distance from this site. Whether the DNA is cut or modified depends on the methylation state of the target sequence. When the target site is unmodified, the DNA is cut. When the target site is hemimethylated, the complex acts as a maintenance MTase modifying the DNA so that both strands become methylated. After locating a non-methylated recognition site, the enzyme complex serves as a molecular motor that translocates DNA in an ATP-dependent manner until a collision occurs that triggers cleavage. The protein is Type I restriction enzyme EcoEI specificity subunit of Escherichia coli.